A 279-amino-acid chain; its full sequence is MKENKIIIGSHVEFKAPDYLFGAAKTSYNNKANAMMIYLGAPQNSKRVNVSKYKIEEYKRDFEKIIVPENIIVHAPYITNCANPDKFDFATDFLIEEIRRMSFFGAKYLVLHPGAFTTFSKEIAYEILEKALIKILDQTENVVIALETMSGKGTEIGTKINELTNLIEKIKSPRLALCLDTCHVWDAGYDIKNLEVFINHLEEIDALKYIKVIHLNDSKNDIFSKKDRHENIGKGFIGFETLQKIVFHEKFKNIPIILETPWVENIPIYDKEIKLLLGQ.

Zn(2+) contacts are provided by His74, His112, Glu147, Asp180, His183, His214, Asp227, His229, and Glu259.

It belongs to the AP endonuclease 2 family. Zn(2+) serves as cofactor.

The catalysed reaction is Endonucleolytic cleavage to 5'-phosphooligonucleotide end-products.. In terms of biological role, endonuclease IV plays a role in DNA repair. It cleaves phosphodiester bonds at apurinic or apyrimidinic (AP) sites, generating a 3'-hydroxyl group and a 5'-terminal sugar phosphate. In Mycoplasma mobile (strain ATCC 43663 / 163K / NCTC 11711) (Mesomycoplasma mobile), this protein is Probable endonuclease 4.